Here is a 38-residue protein sequence, read N- to C-terminus: Photosystem II reaction center protein L (38 aa).

A helical membrane pass occupies residues 17-37; it reads SLYWGLLLIFVLAVLFSNYFF.

This sequence belongs to the PsbL family. PSII is composed of 1 copy each of membrane proteins PsbA, PsbB, PsbC, PsbD, PsbE, PsbF, PsbH, PsbI, PsbJ, PsbK, PsbL, PsbM, PsbT, PsbX, PsbY, PsbZ, Psb30/Ycf12, at least 3 peripheral proteins of the oxygen-evolving complex and a large number of cofactors. It forms dimeric complexes.

It localises to the plastid. It is found in the chloroplast thylakoid membrane. One of the components of the core complex of photosystem II (PSII). PSII is a light-driven water:plastoquinone oxidoreductase that uses light energy to abstract electrons from H(2)O, generating O(2) and a proton gradient subsequently used for ATP formation. It consists of a core antenna complex that captures photons, and an electron transfer chain that converts photonic excitation into a charge separation. This subunit is found at the monomer-monomer interface and is required for correct PSII assembly and/or dimerization. In Huperzia lucidula (Shining clubmoss), this protein is Photosystem II reaction center protein L.